Here is a 174-residue protein sequence, read N- to C-terminus: Translation initiation factor IF-3 (174 aa).

It belongs to the IF-3 family. Monomer.

It is found in the cytoplasm. Functionally, IF-3 binds to the 30S ribosomal subunit and shifts the equilibrium between 70S ribosomes and their 50S and 30S subunits in favor of the free subunits, thus enhancing the availability of 30S subunits on which protein synthesis initiation begins. The chain is Translation initiation factor IF-3 from Azorhizobium caulinodans (strain ATCC 43989 / DSM 5975 / JCM 20966 / LMG 6465 / NBRC 14845 / NCIMB 13405 / ORS 571).